Here is a 159-residue protein sequence, read N- to C-terminus: 2-C-methyl-D-erythritol 2,4-cyclodiphosphate synthase (159 aa).

A divalent metal cation contacts are provided by aspartate 10 and histidine 12. 4-CDP-2-C-methyl-D-erythritol 2-phosphate is bound by residues aspartate 10 to histidine 12 and histidine 36 to serine 37. Histidine 44 is a binding site for a divalent metal cation. 4-CDP-2-C-methyl-D-erythritol 2-phosphate contacts are provided by residues aspartate 58 to glycine 60 and arginine 144.

The protein belongs to the IspF family. As to quaternary structure, homotrimer. Requires a divalent metal cation as cofactor.

The catalysed reaction is 4-CDP-2-C-methyl-D-erythritol 2-phosphate = 2-C-methyl-D-erythritol 2,4-cyclic diphosphate + CMP. It functions in the pathway isoprenoid biosynthesis; isopentenyl diphosphate biosynthesis via DXP pathway; isopentenyl diphosphate from 1-deoxy-D-xylulose 5-phosphate: step 4/6. Functionally, involved in the biosynthesis of isopentenyl diphosphate (IPP) and dimethylallyl diphosphate (DMAPP), two major building blocks of isoprenoid compounds. Catalyzes the conversion of 4-diphosphocytidyl-2-C-methyl-D-erythritol 2-phosphate (CDP-ME2P) to 2-C-methyl-D-erythritol 2,4-cyclodiphosphate (ME-CPP) with a corresponding release of cytidine 5-monophosphate (CMP). In Paraburkholderia phymatum (strain DSM 17167 / CIP 108236 / LMG 21445 / STM815) (Burkholderia phymatum), this protein is 2-C-methyl-D-erythritol 2,4-cyclodiphosphate synthase.